The chain runs to 317 residues: Olfactory receptor 2G2 (317 aa).

The Extracellular segment spans residues 1–28; that stretch reads MGMVRHTNESNLAGFILLGFSDYPQLQK. Asn-8 carries N-linked (GlcNAc...) asparagine glycosylation. A helical membrane pass occupies residues 29–52; sequence VLFVLILILYLLTILGNTTIILVS. The Cytoplasmic portion of the chain corresponds to 53 to 60; the sequence is RLEPKLHM. The helical transmembrane segment at 61–82 threads the bilayer; sequence PMYFFLSHLSFLYRCFTSSVIP. Residues 83-103 lie on the Extracellular side of the membrane; that stretch reads QLLVNLWEPMKTIAYGGCLVH. A disulfide bridge connects residues Cys-100 and Cys-192. A helical transmembrane segment spans residues 104 to 123; the sequence is LYNSHALGSTECVLPAVMSC. Residues 124-142 lie on the Cytoplasmic side of the membrane; the sequence is DRYVAVCRPLHYTVLMHIH. The chain crosses the membrane as a helical span at residues 143-161; it reads LCMALASMAWLSGIATTLV. Residues 162-198 are Extracellular-facing; that stretch reads QSTLTLQLPFCGHRQVDHFICEVPVLIKLACVGTTFN. The chain crosses the membrane as a helical span at residues 199–222; that stretch reads EAELFVASILFLIVPVSFILVSSG. The Cytoplasmic portion of the chain corresponds to 223–239; the sequence is YIAHAVLRIKSATRRQK. Residues 240–262 form a helical membrane-spanning segment; that stretch reads AFGTCFSHLTVVTIFYGTIIFMY. At 263–275 the chain is on the extracellular side; it reads LQPAKSRSRDQGK. A helical membrane pass occupies residues 276–295; that stretch reads FVSLFYTVVTRMLNPLIYTL. At 296–317 the chain is on the cytoplasmic side; that stretch reads RIKEVKGALKKVLAKALGVNIL.

Belongs to the G-protein coupled receptor 1 family.

The protein resides in the cell membrane. In terms of biological role, odorant receptor. In Homo sapiens (Human), this protein is Olfactory receptor 2G2 (OR2G2).